The sequence spans 103 residues: Small ribosomal subunit protein uS10 (103 aa).

The protein belongs to the universal ribosomal protein uS10 family. In terms of assembly, part of the 30S ribosomal subunit.

Involved in the binding of tRNA to the ribosomes. In Clostridioides difficile (strain 630) (Peptoclostridium difficile), this protein is Small ribosomal subunit protein uS10.